The following is a 394-amino-acid chain: Candidapepsin (394 aa).

The first 23 residues, Met-1–Gly-23, serve as a signal peptide directing secretion. Positions Leu-24–Arg-60 are cleaved as a propeptide — activation peptide. N-linked (GlcNAc...) asparagine glycosylation is present at Asn-50. The region spanning Tyr-74–Ala-381 is the Peptidase A1 domain. Asp-92 is an active-site residue. Cys-107 and Cys-119 are disulfide-bonded. Asp-278 is an active-site residue. An intrachain disulfide couples Cys-314 to Cys-347.

This sequence belongs to the peptidase A1 family. Post-translationally, O-glycosylated.

The protein localises to the secreted. It carries out the reaction Preferential cleavage at the carboxyl of hydrophobic amino acids, but fails to cleave 15-Leu-|-Tyr-16, 16-Tyr-|-Leu-17 and 24-Phe-|-Phe-25 of insulin B chain. Activates trypsinogen, and degrades keratin.. The chain is Candidapepsin (SAPT1) from Candida tropicalis (Yeast).